A 211-amino-acid polypeptide reads, in one-letter code: 2,3-bisphosphoglycerate-dependent phosphoglycerate mutase (211 aa).

Residues arginine 9 to asparagine 16, threonine 22 to glycine 23, arginine 61, glutamate 88 to tyrosine 91, lysine 99, arginine 115 to arginine 116, and glycine 159 to asparagine 160 contribute to the substrate site. The active-site Tele-phosphohistidine intermediate is the histidine 10. Glutamate 88 serves as the catalytic Proton donor/acceptor.

Belongs to the phosphoglycerate mutase family. BPG-dependent PGAM subfamily. As to quaternary structure, homodimer.

It carries out the reaction (2R)-2-phosphoglycerate = (2R)-3-phosphoglycerate. The protein operates within carbohydrate degradation; glycolysis; pyruvate from D-glyceraldehyde 3-phosphate: step 3/5. Catalyzes the interconversion of 2-phosphoglycerate and 3-phosphoglycerate. This Sinorhizobium fredii (strain NBRC 101917 / NGR234) protein is 2,3-bisphosphoglycerate-dependent phosphoglycerate mutase.